Reading from the N-terminus, the 338-residue chain is Aspartate carbamoyltransferase catalytic subunit (338 aa).

Carbamoyl phosphate is bound by residues Arg-71 and Thr-72. Lys-99 is an L-aspartate binding site. Carbamoyl phosphate is bound by residues Arg-121, His-151, and Gln-154. Arg-184 and Arg-239 together coordinate L-aspartate. Carbamoyl phosphate-binding residues include Gly-280 and Pro-281.

This sequence belongs to the aspartate/ornithine carbamoyltransferase superfamily. ATCase family. As to quaternary structure, heterododecamer (2C3:3R2) of six catalytic PyrB chains organized as two trimers (C3), and six regulatory PyrI chains organized as three dimers (R2).

The enzyme catalyses carbamoyl phosphate + L-aspartate = N-carbamoyl-L-aspartate + phosphate + H(+). The protein operates within pyrimidine metabolism; UMP biosynthesis via de novo pathway; (S)-dihydroorotate from bicarbonate: step 2/3. Its function is as follows. Catalyzes the condensation of carbamoyl phosphate and aspartate to form carbamoyl aspartate and inorganic phosphate, the committed step in the de novo pyrimidine nucleotide biosynthesis pathway. This is Aspartate carbamoyltransferase catalytic subunit from Stutzerimonas stutzeri (strain A1501) (Pseudomonas stutzeri).